The primary structure comprises 861 residues: DNA mismatch repair protein MutS (861 aa).

617–624 (GPNMGGKS) serves as a coordination point for ATP. The tract at residues 799-822 (ETTSLPHEQPPAAKAKDAPQVPHQ) is disordered. Positions 808–820 (PPAAKAKDAPQVP) are enriched in low complexity.

This sequence belongs to the DNA mismatch repair MutS family.

This protein is involved in the repair of mismatches in DNA. It is possible that it carries out the mismatch recognition step. This protein has a weak ATPase activity. This is DNA mismatch repair protein MutS from Pseudomonas putida (strain GB-1).